Consider the following 93-residue polypeptide: Small integral membrane protein 36 (93 aa).

The chain crosses the membrane as a helical span at residues 14–34; it reads LIILVASYVILLLVFLISCVL. Residues 73–93 form a disordered region; the sequence is PKGPGLSLGDPAPLGKKSTMV.

It is found in the membrane. The polypeptide is Small integral membrane protein 36 (Homo sapiens (Human)).